Consider the following 401-residue polypeptide: MDIKKILAEVKRGCAELIDEERIENLIKNYYEKGENFFIKAGFDPTAPDLHLGHSVVLTKMAFLQKHGAIVQFLIGDFTGQIGDPSGKSATRKKLDKEQVLINAKTYKTQVFKVLDKEKTQIKFNSTWLNELGAAGIVELTSTFSVARMLERDDFTKRFKEQSPISICEFLYPLLQGYDSVALKSDIEMGGTDQKFNLLMGRQLQRVYNIGKEQAVIMMPLLEGLDGVNKMSKSLNNYIGVTEKANDMYAKILSISDELMFRYYELLSQKSLEEIAQIKKDIEQGNLHPKKAKENLALEITERFHSKEEANNAKSEFDRIHSQNALPSDMAEFEIQGKIWLAKALVECGLESSTSAARRSISANAVSVNSQKVSDEQMYLEQGEYILQIGKRKFAKLKVKE.

Residues proline 45–histidine 54 carry the 'HIGH' region motif. A 'KMSKS' region motif is present at residues lysine 230 to serine 234. Lysine 233 is a binding site for ATP. An S4 RNA-binding domain is found at isoleucine 339–valine 399.

It belongs to the class-I aminoacyl-tRNA synthetase family. TyrS type 2 subfamily. In terms of assembly, homodimer.

The protein resides in the cytoplasm. The catalysed reaction is tRNA(Tyr) + L-tyrosine + ATP = L-tyrosyl-tRNA(Tyr) + AMP + diphosphate + H(+). Its function is as follows. Catalyzes the attachment of tyrosine to tRNA(Tyr) in a two-step reaction: tyrosine is first activated by ATP to form Tyr-AMP and then transferred to the acceptor end of tRNA(Tyr). The chain is Tyrosine--tRNA ligase from Campylobacter jejuni subsp. jejuni serotype O:2 (strain ATCC 700819 / NCTC 11168).